We begin with the raw amino-acid sequence, 109 residues long: Photosystem II reaction center Psb28 protein (109 aa).

It belongs to the Psb28 family. Part of the photosystem II complex.

Its subcellular location is the plastid. The protein resides in the chloroplast thylakoid membrane. The sequence is that of Photosystem II reaction center Psb28 protein from Cyanidioschyzon merolae (strain NIES-3377 / 10D) (Unicellular red alga).